Here is a 238-residue protein sequence, read N- to C-terminus: Probable transcriptional regulatory protein YeeN (238 aa).

It belongs to the TACO1 family. YeeN subfamily.

The protein resides in the cytoplasm. The polypeptide is Probable transcriptional regulatory protein YeeN (Salmonella choleraesuis (strain SC-B67)).